A 78-amino-acid chain; its full sequence is Defensin-like protein 201 (78 aa).

The N-terminal stretch at 1-22 (MRNLINFAVLIMTIFIVSASGA) is a signal peptide. 4 cysteine pairs are disulfide-bonded: C32-C78, C41-C61, C46-C71, and C50-C73.

This sequence belongs to the DEFL family.

It is found in the secreted. The protein is Defensin-like protein 201 of Arabidopsis thaliana (Mouse-ear cress).